A 262-amino-acid chain; its full sequence is Merozoite surface protein 2 (262 aa).

The N-terminal stretch at 1–20 is a signal peptide; that stretch reads MKVIKTLSIINFFIFVTFNI. Asn-22 and Asn-36 each carry an N-linked (GlcNAc...) asparagine glycan. Residues 44–188 form a polymorphic region region; sequence AESKPPTGTG…EQTESPELQS (145 aa). Residues 44–223 form a disordered region; it reads AESKPPTGTG…DSQKECTDGN (180 aa). Positions 51–66 are enriched in gly residues; sequence GTGGSGSAGSGAGASA. Low complexity predominate over residues 67–111; sequence GNGANPGADAERSPSTPATPATPATTTTTTTTNDAEASTSTSSEN. A compositionally biased stretch (basic and acidic residues) spans 112 to 127; that stretch reads PNHKNAETNPKGKGEV. Composition is skewed to polar residues over residues 129-155 and 162-190; these read KPNQ…NVPP and KSPT…QSAP. A glycan (N-linked (GlcNAc...) asparagine) is linked at Asn-139. A glycan (N-linked (GlcNAc...) asparagine) is linked at Asn-211. A disulfide bridge connects residues Cys-219 and Cys-227. Asn-235 and Asn-236 each carry an N-linked (GlcNAc...) asparagine glycan. Asn-236 is lipidated: GPI-anchor amidated asparagine. Residues 237–262 constitute a propeptide, removed in mature form; the sequence is SSNIASINKFVVLISATLVLSFAIFI.

The protein resides in the cell membrane. Functionally, may play a role in the merozoite attachment to the erythrocyte. This Plasmodium falciparum (isolate Camp / Malaysia) protein is Merozoite surface protein 2.